A 446-amino-acid chain; its full sequence is UDP-N-acetylmuramoylalanine--D-glutamate ligase (446 aa).

G115–T121 contributes to the ATP binding site.

Belongs to the MurCDEF family.

Its subcellular location is the cytoplasm. The enzyme catalyses UDP-N-acetyl-alpha-D-muramoyl-L-alanine + D-glutamate + ATP = UDP-N-acetyl-alpha-D-muramoyl-L-alanyl-D-glutamate + ADP + phosphate + H(+). The protein operates within cell wall biogenesis; peptidoglycan biosynthesis. Functionally, cell wall formation. Catalyzes the addition of glutamate to the nucleotide precursor UDP-N-acetylmuramoyl-L-alanine (UMA). In Hahella chejuensis (strain KCTC 2396), this protein is UDP-N-acetylmuramoylalanine--D-glutamate ligase.